Reading from the N-terminus, the 1043-residue chain is Rho GTPase-activating protein gacZ (1043 aa).

A disordered region spans residues 1-44 (MTTTNTSIFGPRVNNSKFNNNNNNNNNNNNNNNNTSNNNNSNII). Low complexity predominate over residues 14 to 44 (NNSKFNNNNNNNNNNNNNNNNTSNNNNSNII). Cys-71, Cys-74, Cys-82, Cys-85, Cys-91, His-95, His-103, and Cys-107 together coordinate Zn(2+). Residues 71–107 (CVICKSKNVQVCTGCLMVYYCGAEHQNIDWPNHKSLC) form an MYND-type; atypical zinc finger. Disordered stretches follow at residues 137–163 (SGNRVSNSNNNSSIYSNSTGNINNNNN), 199–532 (HLQQ…NNSN), 546–594 (DGLS…NGNR), 614–690 (FYQS…TNNN), 706–772 (NTSQ…QLSA), and 801–842 (NKVS…NNNN). A compositionally biased stretch (low complexity) spans 201-225 (QQQIQQTQQTQQQPPPTTTSIPTQP). Over residues 241–253 (SFKSSSSGDNTPI) the composition is skewed to polar residues. Low complexity-rich tracts occupy residues 254–293 (NQSPSSSSSSLVSSTNNNNNNNNNNNNNNNINSNSNNMSG) and 307–411 (NSIN…TNEE). Positions 453 to 466 (GTLKQSSSSDSIYF) are enriched in polar residues. Composition is skewed to low complexity over residues 467 to 532 (NNNN…NNSN) and 547 to 594 (GLSY…NGNR). Positions 615 to 625 (YQSNKNQSNGY) are enriched in polar residues. Over residues 644 to 671 (ENDDSHEECDDDDDDDDGGGQDGDDGLD) the composition is skewed to acidic residues. Composition is skewed to low complexity over residues 726 to 736 (DTQSQSTNSTT), 752 to 771 (SSDDLQQQQTQTQQQQSQLS), 801 to 821 (NKVSEVTSKSKSSTSVNNNNN), and 829 to 842 (NNNNNNNNINNNNN). A coiled-coil region spans residues 825–852 (DHNENNNNNNNNINNNNNNNNNNIENII). The Rho-GAP domain occupies 855–1043 (IPLEEAVKKS…FGIQTYNYNS (189 aa)).

It is found in the cytoplasm. In terms of biological role, rho GTPase-activating protein involved in the signal transduction pathway. In Dictyostelium discoideum (Social amoeba), this protein is Rho GTPase-activating protein gacZ (gacZ).